The sequence spans 300 residues: Pantoate--beta-alanine ligase (300 aa).

Residue 43–50 coordinates ATP; sequence MGYLHSGH. The active-site Proton donor is the His-50. (R)-pantoate is bound at residue Gln-74. Gln-74 contacts beta-alanine. Residue 162-165 participates in ATP binding; that stretch reads GQKD. Gln-168 serves as a coordination point for (R)-pantoate. ATP-binding positions include Ile-191 and 199–202; that span reads KSSR.

It belongs to the pantothenate synthetase family. In terms of assembly, homodimer.

It is found in the cytoplasm. The catalysed reaction is (R)-pantoate + beta-alanine + ATP = (R)-pantothenate + AMP + diphosphate + H(+). The protein operates within cofactor biosynthesis; (R)-pantothenate biosynthesis; (R)-pantothenate from (R)-pantoate and beta-alanine: step 1/1. Catalyzes the condensation of pantoate with beta-alanine in an ATP-dependent reaction via a pantoyl-adenylate intermediate. This is Pantoate--beta-alanine ligase (panC) from Dictyostelium discoideum (Social amoeba).